Consider the following 771-residue polypeptide: Myotubularin-related protein 10 (771 aa).

In terms of domain architecture, Myotubularin phosphatase spans 217–657 (FETYSDWDRE…THIKLWKLCY (441 aa)). Phosphoserine occurs at positions 603 and 745.

It belongs to the protein-tyrosine phosphatase family. Non-receptor class myotubularin subfamily.

This Mus musculus (Mouse) protein is Myotubularin-related protein 10 (Mtmr10).